A 628-amino-acid chain; its full sequence is Probable alpha-L-arabinofuranosidase A (628 aa).

Residues 1 to 25 (MVAFSTISGLGALSLLFSIIESVDG) form the signal peptide. 9 N-linked (GlcNAc...) asparagine glycosylation sites follow: Asn-36, Asn-51, Asn-74, Asn-152, Asn-164, Asn-260, Asn-359, Asn-404, and Asn-493.

The protein belongs to the glycosyl hydrolase 51 family.

It is found in the secreted. It carries out the reaction Hydrolysis of terminal non-reducing alpha-L-arabinofuranoside residues in alpha-L-arabinosides.. It participates in glycan metabolism; L-arabinan degradation. Alpha-L-arabinofuranosidase involved in the degradation of arabinoxylan, a major component of plant hemicellulose. Acts only on small linear 1,5-alpha-linked L-arabinofuranosyl oligosaccharides. The protein is Probable alpha-L-arabinofuranosidase A (abfA) of Aspergillus terreus (strain NIH 2624 / FGSC A1156).